Here is a 404-residue protein sequence, read N- to C-terminus: DNA polymerase processivity factor BMRF1 (404 aa).

Residues 1–300 (METTQTLRFK…SVILFNHASE (300 aa)) form a homodimerization; DNA binding and DNA polymerase processivity region. A transcriptional activation region spans residues 301–404 (EAAASTASEP…KVKQAFNPLI (104 aa)). The segment at 302–404 (AAASTASEPE…KVKQAFNPLI (103 aa)) is disordered. Residues 335-344 (SPSPPPPPRT) are compositionally biased toward pro residues. S337 is subject to Phosphoserine. Phosphothreonine is present on T344. At S349 the chain carries Phosphoserine. T355 carries the post-translational modification Phosphothreonine.

This sequence belongs to the herpesviridae DNA polymerase accessory subunit family. As to quaternary structure, homodimer. Two dimers can adopt a tetrameric ring-like structure. Forms a complex with the DNA-binding protein BALF2, the DNA polymerase subunit BALF5, and the alkaline exonuclease BGLF5. Interacts (via N-terminus) with BZLF1 (via bZIP domain); this interaction may inhibit BZLF1-induced transcription of the BMRF1 promoter. Interacts (via C-terminus) with host NuRD complex; this interaction is important for transcriptional activation of EBV promoters and inhibition of the ubiquitination step of DDR signaling. Phosphorylated by the viral BGLF4 kinase.

It localises to the virion tegument. It is found in the host nucleus. In terms of biological role, acts as a DNA polymerase processivity factor; a transcriptional activator for several EBV promoters and inhibits the host DNA damage response (DDR) to double-stranded DNA breaks. Plays an essential role in the viral lytic DNA replication by acting as a polymerase accessory subunit. Stimulates the viral DNA polymerase activity and appears to function with it as a holoenzyme. Increases the processivity of the viral polymerase, probably by acting as a sliding clamp that prevents dissociation of the polymerase from the active template. In addition, BMRF1 transcriptionally activates the oriLyt early BHLF1 promoter. Promotes G1/S cell cycle arrest through p53 induction. The sequence is that of DNA polymerase processivity factor BMRF1 from Epstein-Barr virus (strain AG876) (HHV-4).